A 227-amino-acid polypeptide reads, in one-letter code: Cytochrome c oxidase subunit 2 (227 aa).

Over 1–14 (MAYPFQLGLQDATS) the chain is Mitochondrial intermembrane. Residues 15-45 (PIMEELTNFHDHTLMIVFLISSLVLYIISLM) form a helical membrane-spanning segment. Residues 46 to 59 (LTTKLTHTSTMDAQ) are Mitochondrial matrix-facing. A helical transmembrane segment spans residues 60-87 (EVETIWTILPAAILVLIALPSLRILYMM). The Mitochondrial intermembrane portion of the chain corresponds to 88-227 (DEINNPALTV…YFENWSASMI (140 aa)). Cu cation-binding residues include histidine 161, cysteine 196, glutamate 198, cysteine 200, histidine 204, and methionine 207. Glutamate 198 is a Mg(2+) binding site. Position 218 is a phosphotyrosine (tyrosine 218).

It belongs to the cytochrome c oxidase subunit 2 family. In terms of assembly, component of the cytochrome c oxidase (complex IV, CIV), a multisubunit enzyme composed of 14 subunits. The complex is composed of a catalytic core of 3 subunits MT-CO1, MT-CO2 and MT-CO3, encoded in the mitochondrial DNA, and 11 supernumerary subunits COX4I, COX5A, COX5B, COX6A, COX6B, COX6C, COX7A, COX7B, COX7C, COX8 and NDUFA4, which are encoded in the nuclear genome. The complex exists as a monomer or a dimer and forms supercomplexes (SCs) in the inner mitochondrial membrane with NADH-ubiquinone oxidoreductase (complex I, CI) and ubiquinol-cytochrome c oxidoreductase (cytochrome b-c1 complex, complex III, CIII), resulting in different assemblies (supercomplex SCI(1)III(2)IV(1) and megacomplex MCI(2)III(2)IV(2)). Found in a complex with TMEM177, COA6, COX18, COX20, SCO1 and SCO2. Interacts with TMEM177 in a COX20-dependent manner. Interacts with COX20. Interacts with COX16. The cofactor is Cu cation.

The protein localises to the mitochondrion inner membrane. It catalyses the reaction 4 Fe(II)-[cytochrome c] + O2 + 8 H(+)(in) = 4 Fe(III)-[cytochrome c] + 2 H2O + 4 H(+)(out). Its function is as follows. Component of the cytochrome c oxidase, the last enzyme in the mitochondrial electron transport chain which drives oxidative phosphorylation. The respiratory chain contains 3 multisubunit complexes succinate dehydrogenase (complex II, CII), ubiquinol-cytochrome c oxidoreductase (cytochrome b-c1 complex, complex III, CIII) and cytochrome c oxidase (complex IV, CIV), that cooperate to transfer electrons derived from NADH and succinate to molecular oxygen, creating an electrochemical gradient over the inner membrane that drives transmembrane transport and the ATP synthase. Cytochrome c oxidase is the component of the respiratory chain that catalyzes the reduction of oxygen to water. Electrons originating from reduced cytochrome c in the intermembrane space (IMS) are transferred via the dinuclear copper A center (CU(A)) of subunit 2 and heme A of subunit 1 to the active site in subunit 1, a binuclear center (BNC) formed by heme A3 and copper B (CU(B)). The BNC reduces molecular oxygen to 2 water molecules using 4 electrons from cytochrome c in the IMS and 4 protons from the mitochondrial matrix. This is Cytochrome c oxidase subunit 2 (MT-CO2) from Rhabdomys pumilio (Four-striped grass mouse).